Consider the following 582-residue polypeptide: La-related protein 7 (582 aa).

N-acetylmethionine is present on Met1. Residues 1–27 (METESGNQEKVMEEESTEKKKEVEKKK) are disordered. The span at 10–25 (KVMEEESTEKKKEVEK) shows a compositional bias: basic and acidic residues. The HTH La-type RNA-binding domain occupies 28 to 122 (RSRVKQVLAD…KPLGERPKDE (95 aa)). An RRM domain is found at 125–203 (RTVYVELLPK…PRKPGIFPKT (79 aa)). Disordered stretches follow at residues 188–368 (NPPE…ERHK) and 410–442 (KSESEMETDSGVPQNTGMKNEKTANREECRTQE). Residues 219-228 (KKKKKKKGRM) are compositionally biased toward basic residues. The span at 229–240 (KKEDNIQAKEEN) shows a compositional bias: basic and acidic residues. Lys237 is covalently cross-linked (Glycyl lysine isopeptide (Lys-Gly) (interchain with G-Cter in SUMO2)). Thr257 bears the Phosphothreonine mark. Phosphoserine occurs at positions 258, 261, 273, 298, 299, and 300. Residues 316–335 (IQKDIIKEASEASKENRDIE) show a composition bias toward basic and acidic residues. Ser337 is subject to Phosphoserine. Position 338 is a phosphothreonine (Thr338). Ser351 is subject to Phosphoserine. Residues 354 to 367 (KTKRKHKKKHKERH) show a composition bias toward basic residues. Lys410 participates in a covalent cross-link: Glycyl lysine isopeptide (Lys-Gly) (interchain with G-Cter in SUMO2). A compositionally biased stretch (basic and acidic residues) spans 428–442 (KNEKTANREECRTQE). The 114-residue stretch at 450–563 (QFVSGVIVKI…TEKLITKAEK (114 aa)) folds into the xRRM domain.

Belongs to the LARP7 family. As to quaternary structure, core component of the 7SK RNP complex, at least composed of 7SK RNA, LARP7, MEPCE, HEXIM1 (or HEXIM2) and P-TEFb (composed of CDK9 and CCNT1/cyclin-T1). Interacts with METTL16. Interacts with RBM7; upon genotoxic stress this interaction is enhanced, triggering the release of inactive P-TEFb complex from the core, yielding to P-TEFb complex activation. Associates with box C/D small nucleolar ribonucleoprotein (snoRNP) complexes.

Its subcellular location is the nucleus. It is found in the nucleoplasm. RNA-binding protein that specifically binds distinct small nuclear RNA (snRNAs) and regulates their processing and function. Specifically binds the 7SK snRNA (7SK RNA) and acts as a core component of the 7SK ribonucleoprotein (RNP) complex, thereby acting as a negative regulator of transcription elongation by RNA polymerase II. The 7SK RNP complex sequesters the positive transcription elongation factor b (P-TEFb) in a large inactive 7SK RNP complex preventing RNA polymerase II phosphorylation and subsequent transcriptional elongation. The 7SK RNP complex also promotes snRNA gene transcription by RNA polymerase II via interaction with the little elongation complex (LEC). LARP7 specifically binds to the highly conserved 3'-terminal U-rich stretch of 7SK RNA; on stimulation, remains associated with 7SK RNA, whereas P-TEFb is released from the complex. LARP7 also acts as a regulator of mRNA splicing fidelity by promoting U6 snRNA processing. Specifically binds U6 snRNAs and associates with a subset of box C/D RNP complexes: promotes U6 snRNA 2'-O-methylation by facilitating U6 snRNA loading into box C/D RNP complexes. U6 snRNA 2'-O-methylation is required for mRNA splicing fidelity. Binds U6 snRNAs with a 5'-CAGGG-3' sequence motif. U6 snRNA processing is required for spermatogenesis. This chain is La-related protein 7, found in Homo sapiens (Human).